Reading from the N-terminus, the 164-residue chain is Putative F-box protein At1g59675 (164 aa).

The 48-residue stretch at 9–56 (SQSDHVPLDLTIEILSRLPAKSVGRFRSVSKLWSANTTSQNFINSFAT) folds into the F-box domain.

This is Putative F-box protein At1g59675 from Arabidopsis thaliana (Mouse-ear cress).